The primary structure comprises 90 residues: Probable Fe(2+)-trafficking protein (90 aa).

This sequence belongs to the Fe(2+)-trafficking protein family.

Its function is as follows. Could be a mediator in iron transactions between iron acquisition and iron-requiring processes, such as synthesis and/or repair of Fe-S clusters in biosynthetic enzymes. This chain is Probable Fe(2+)-trafficking protein, found in Polynucleobacter asymbioticus (strain DSM 18221 / CIP 109841 / QLW-P1DMWA-1) (Polynucleobacter necessarius subsp. asymbioticus).